The chain runs to 497 residues: Cysteine--tRNA ligase (497 aa).

C46 lines the Zn(2+) pocket. Residues 48–58 carry the 'HIGH' region motif; sequence PTVYSDAHLGH. The Zn(2+) site is built by C237, H262, and E266. Positions 293–297 match the 'KMSKS' region motif; the sequence is KMSKS. ATP is bound at residue K296.

It belongs to the class-I aminoacyl-tRNA synthetase family. Monomer. It depends on Zn(2+) as a cofactor.

The protein localises to the cytoplasm. It catalyses the reaction tRNA(Cys) + L-cysteine + ATP = L-cysteinyl-tRNA(Cys) + AMP + diphosphate. This Deinococcus geothermalis (strain DSM 11300 / CIP 105573 / AG-3a) protein is Cysteine--tRNA ligase.